Reading from the N-terminus, the 326-residue chain is Biotin synthase (326 aa).

A Radical SAM core domain is found at 51–278; that stretch reads NRVQVSRLIS…KSFVRLSAGR (228 aa). Residues Cys-66, Cys-70, and Cys-73 each coordinate [4Fe-4S] cluster. Residues Cys-110, Cys-141, Cys-201, and Arg-273 each coordinate [2Fe-2S] cluster.

It belongs to the radical SAM superfamily. Biotin synthase family. Homodimer. Requires [4Fe-4S] cluster as cofactor. [2Fe-2S] cluster serves as cofactor.

It catalyses the reaction (4R,5S)-dethiobiotin + (sulfur carrier)-SH + 2 reduced [2Fe-2S]-[ferredoxin] + 2 S-adenosyl-L-methionine = (sulfur carrier)-H + biotin + 2 5'-deoxyadenosine + 2 L-methionine + 2 oxidized [2Fe-2S]-[ferredoxin]. Its pathway is cofactor biosynthesis; biotin biosynthesis; biotin from 7,8-diaminononanoate: step 2/2. Catalyzes the conversion of dethiobiotin (DTB) to biotin by the insertion of a sulfur atom into dethiobiotin via a radical-based mechanism. This Paramagnetospirillum magneticum (strain ATCC 700264 / AMB-1) (Magnetospirillum magneticum) protein is Biotin synthase.